A 213-amino-acid chain; its full sequence is tRNA (guanine-N(7)-)-methyltransferase (213 aa).

4 residues coordinate S-adenosyl-L-methionine: Asp40, Glu65, Asn92, and Asp118. Residue Asp118 is part of the active site. Residues Lys122 and Asp154 each coordinate substrate.

It belongs to the class I-like SAM-binding methyltransferase superfamily. TrmB family.

The catalysed reaction is guanosine(46) in tRNA + S-adenosyl-L-methionine = N(7)-methylguanosine(46) in tRNA + S-adenosyl-L-homocysteine. It functions in the pathway tRNA modification; N(7)-methylguanine-tRNA biosynthesis. Functionally, catalyzes the formation of N(7)-methylguanine at position 46 (m7G46) in tRNA. The chain is tRNA (guanine-N(7)-)-methyltransferase from Synechococcus elongatus (strain ATCC 33912 / PCC 7942 / FACHB-805) (Anacystis nidulans R2).